Here is a 102-residue protein sequence, read N- to C-terminus: Small ribosomal subunit protein uS10 (102 aa).

This sequence belongs to the universal ribosomal protein uS10 family. In terms of assembly, part of the 30S ribosomal subunit.

Involved in the binding of tRNA to the ribosomes. In Methanothermobacter thermautotrophicus (strain ATCC 29096 / DSM 1053 / JCM 10044 / NBRC 100330 / Delta H) (Methanobacterium thermoautotrophicum), this protein is Small ribosomal subunit protein uS10.